A 600-amino-acid chain; its full sequence is Adenine deaminase 4 (600 aa).

The protein belongs to the metallo-dependent hydrolases superfamily. Adenine deaminase family. Mn(2+) is required as a cofactor.

It carries out the reaction adenine + H2O + H(+) = hypoxanthine + NH4(+). The protein is Adenine deaminase 4 of Rhizobium meliloti (strain 1021) (Ensifer meliloti).